A 674-amino-acid polypeptide reads, in one-letter code: Tripartite terminase subunit 3 (674 aa).

Positions 212–219 match the Walker A motif motif; that stretch reads VPRRHGKT. The Walker B motif motif lies at 305–310; it reads LLLVDE. Glutamate 310 serves as the catalytic For ATPase activity. Active-site for nuclease activity residues include aspartate 463 and glutamate 534. The required for interaction with UL56 and DNA packaging stretch occupies residues 580–600; the sequence is GRDKALAVEQFISRFNSGYIK. Residue aspartate 651 is the For nuclease activity of the active site.

It belongs to the herpesviridae TRM3 protein family. Interacts with the terminase subunits TRM1 and TRM2. Interacts with portal protein.

It is found in the host nucleus. Functionally, component of the molecular motor that translocates viral genomic DNA in empty capsid during DNA packaging. Forms a tripartite terminase complex together with TRM1 and TRM2 in the host cytoplasm. Once the complex reaches the host nucleus, it interacts with the capsid portal vertex. This portal forms a ring in which genomic DNA is translocated into the capsid. TRM3 carries an RNase H-like nuclease activity that plays an important role for the cleavage of concatemeric viral DNA into unit length genomes. The protein is Tripartite terminase subunit 3 of Homo sapiens (Human).